The following is a 362-amino-acid chain: Histidinol-phosphate aminotransferase (362 aa).

At Lys-211 the chain carries N6-(pyridoxal phosphate)lysine.

The protein belongs to the class-II pyridoxal-phosphate-dependent aminotransferase family. Histidinol-phosphate aminotransferase subfamily. As to quaternary structure, homodimer. Requires pyridoxal 5'-phosphate as cofactor.

The enzyme catalyses L-histidinol phosphate + 2-oxoglutarate = 3-(imidazol-4-yl)-2-oxopropyl phosphate + L-glutamate. It functions in the pathway amino-acid biosynthesis; L-histidine biosynthesis; L-histidine from 5-phospho-alpha-D-ribose 1-diphosphate: step 7/9. The sequence is that of Histidinol-phosphate aminotransferase from Serratia proteamaculans (strain 568).